The sequence spans 212 residues: MQILLAALIAYLIGSVSFAVIVSAAMGLADPRSYGSKNPGATNVLRSGNKKAAILTLIGDAFKGWIAVWLARRYGLPDVAIAWVAIAVFIGHLYPVFFRFQGGKGVATAAGVLLAVHPVLGLATALTWLIIAFFFRYSSLAALVAAVFAPLFDVFLFGTNHNPIAWAVLAMSVLLVWRHRGNIAKLLAGEESRIGDKKKAAANGNAQDGGKA.

5 helical membrane passes run 3 to 23 (ILLAALIAYLIGSVSFAVIVS), 51 to 71 (KAAILTLIGDAFKGWIAVWLA), 78 to 98 (DVAIAWVAIAVFIGHLYPVFF), 115 to 135 (AVHPVLGLATALTWLIIAFFF), and 139 to 159 (SLAALVAAVFAPLFDVFLFGT).

The protein belongs to the PlsY family. In terms of assembly, probably interacts with PlsX.

It localises to the cell inner membrane. It carries out the reaction an acyl phosphate + sn-glycerol 3-phosphate = a 1-acyl-sn-glycero-3-phosphate + phosphate. It participates in lipid metabolism; phospholipid metabolism. Functionally, catalyzes the transfer of an acyl group from acyl-phosphate (acyl-PO(4)) to glycerol-3-phosphate (G3P) to form lysophosphatidic acid (LPA). This enzyme utilizes acyl-phosphate as fatty acyl donor, but not acyl-CoA or acyl-ACP. This chain is Glycerol-3-phosphate acyltransferase, found in Burkholderia multivorans (strain ATCC 17616 / 249).